Consider the following 322-residue polypeptide: o-succinylbenzoate synthase (322 aa).

Residue lysine 136 is the Proton donor of the active site. Residues aspartate 165, glutamate 194, and aspartate 219 each contribute to the Mg(2+) site. Lysine 243 functions as the Proton acceptor in the catalytic mechanism.

The protein belongs to the mandelate racemase/muconate lactonizing enzyme family. MenC type 1 subfamily. Monomer. A divalent metal cation is required as a cofactor.

It catalyses the reaction (1R,6R)-6-hydroxy-2-succinyl-cyclohexa-2,4-diene-1-carboxylate = 2-succinylbenzoate + H2O. Its pathway is quinol/quinone metabolism; 1,4-dihydroxy-2-naphthoate biosynthesis; 1,4-dihydroxy-2-naphthoate from chorismate: step 4/7. It participates in cofactor biosynthesis; phylloquinone biosynthesis. Its function is as follows. Converts 2-succinyl-6-hydroxy-2,4-cyclohexadiene-1-carboxylate (SHCHC) to 2-succinylbenzoate (OSB). Does not show N-succinylamino acid racemase (NSAR) activity with N-succinyl-L-phenylglycine as substrate. This is o-succinylbenzoate synthase from Thermosynechococcus vestitus (strain NIES-2133 / IAM M-273 / BP-1).